A 601-amino-acid chain; its full sequence is MEGADLLTAGVLFLFAAVAAVPLAARLGIGAVLGYLLAGIAIGPWGLGFISDVDEILHFSELGVVFLMFIIGLELNPSRLWQLRRSIFGVGAAQVLLSAAVLAGLLMLADFLWQAAVVGGIGLAMSSTAMALQLMREKGMNRSESGQLGFSVLLFQDLAVIPALALVPLLAGSADEHFDWFKVAMKVLAFAVMLIGGRYLLRPVFRFIAASGVREVFTAATLLLVLSAALFMDALGLSMALGTFIAGVLLAESEYRHELENAIDPFKGLLLGLFFISVGMSLNLGVLYTHLLWVAASVVILVVIKMLTLYLLARLYGIRSSERMQFASVLSQGGEFAFVLFSTASSQRLFQGDQMALLLVTVTLSMMTTPLLMKGIDKWLSRRLNGPEENDEKPWVEDDKPQVVVVGFGRFGQVIARLLMANKMRITVLERDIGAVNLMRKYGYKVYYGDATQVELLRSAGAEAAESIVITCNEPEDTMKLVALCQQHFPHLHILARARGRVEAHELLQAGVTQFSRETFSSALELGRKTLVSLGMHPHQAQRAQLHFRRLDMRMLRELIPEHSDMVQISRAREARRELEEIFQREMQQERRQLDGWDEFE.

Helical transmembrane passes span 4 to 24 (ADLL…VPLA), 29 to 49 (IGAV…GLGF), 55 to 75 (EILH…GLEL), 87 to 107 (IFGV…GLLM), 111 to 131 (FLWQ…TAMA), 152 to 172 (VLLF…LLAG), 177 to 197 (HFDW…LIGG), 207 to 227 (FIAA…LVLS), 230 to 250 (LFMD…GVLL), 262 to 282 (AIDP…GMSL), 284 to 304 (LGVL…LVVI), 324 to 344 (MQFA…FSTA), and 356 to 376 (ALLL…MKGI). The region spanning 400–519 (KPQVVVVGFG…AGVTQFSRET (120 aa)) is the RCK N-terminal domain.

This sequence belongs to the monovalent cation:proton antiporter 2 (CPA2) transporter (TC 2.A.37) family. KefB subfamily. In terms of assembly, interacts with the regulatory subunit KefG.

The protein resides in the cell inner membrane. Functionally, pore-forming subunit of a potassium efflux system that confers protection against electrophiles. Catalyzes K(+)/H(+) antiport. This chain is Glutathione-regulated potassium-efflux system protein KefB, found in Salmonella typhi.